The primary structure comprises 332 residues: Methylthioribose-1-phosphate isomerase (332 aa).

Residues 44 to 46 (RGA), R87, and Q192 each bind substrate. D233 acts as the Proton donor in catalysis. Position 243–244 (243–244 (NK)) interacts with substrate.

The protein belongs to the eIF-2B alpha/beta/delta subunits family. MtnA subfamily.

The catalysed reaction is 5-(methylsulfanyl)-alpha-D-ribose 1-phosphate = 5-(methylsulfanyl)-D-ribulose 1-phosphate. Its pathway is amino-acid biosynthesis; L-methionine biosynthesis via salvage pathway; L-methionine from S-methyl-5-thio-alpha-D-ribose 1-phosphate: step 1/6. Functionally, catalyzes the interconversion of methylthioribose-1-phosphate (MTR-1-P) into methylthioribulose-1-phosphate (MTRu-1-P). The sequence is that of Methylthioribose-1-phosphate isomerase from Dehalococcoides mccartyi (strain CBDB1).